The chain runs to 207 residues: uncharacterized protein (207 aa).

This is an uncharacterized protein from Methanocaldococcus jannaschii (strain ATCC 43067 / DSM 2661 / JAL-1 / JCM 10045 / NBRC 100440) (Methanococcus jannaschii).